Consider the following 1964-residue polypeptide: Probable helicase with zinc finger domain (1964 aa).

The segment at 178 to 206 adopts a C3H1-type zinc-finger fold; that stretch reads SEEYTLCKRFLEQGICRYGAQCTSAHSQE. Serine 248 bears the Phosphoserine mark. 668–675 is an ATP binding site; the sequence is GPYGTGKT. The DEAA box signature appears at 794 to 797; sequence DEAA. Over residues 1116–1127 the composition is skewed to polar residues; it reads HSGNSSRQQQSP. The tract at residues 1116–1135 is disordered; sequence HSGNSSRQQQSPPKVKSLYH. Phosphothreonine is present on threonine 1163. Omega-N-methylarginine is present on arginine 1245. 6 disordered regions span residues 1248-1350, 1360-1379, 1388-1449, 1463-1491, 1631-1655, and 1743-1964; these read PIPY…LPAP, HFHP…QPHT, LPEQ…QAGP, QSPA…RAIT, QVQP…QFAN, and QHAA…SYFK. Composition is skewed to basic and acidic residues over residues 1268-1281 and 1292-1308; these read HAEK…RNGK and NKIR…KQVD. Residues 1365–1374 show a composition bias toward pro residues; sequence PQLPRPPFPA. Residues 1388 to 1431 show a composition bias toward low complexity; that stretch reads LPEQPNQMAPQPNQVAPQPNQMTPQPNQVAPQPNQVVQQQSQAP. Positions 1635 to 1644 are enriched in pro residues; it reads RSPPAVPSPP. 4 positions are modified to phosphoserine: serine 1636, serine 1760, serine 1763, and serine 1788. A compositionally biased stretch (polar residues) spans 1755-1765; it reads SSRTVSASSLP. Composition is skewed to polar residues over residues 1799 to 1813 and 1826 to 1849; these read PQDS…QGHS and WANT…TSQP. Residues 1860 to 1870 show a composition bias toward basic and acidic residues; sequence KPPEDQLKPES. Composition is skewed to polar residues over residues 1872–1881 and 1897–1910; these read EVSSSFNYSM and IAES…QSPA. Low complexity predominate over residues 1941–1956; that stretch reads PLSLLQELSLGSSPGS.

Belongs to the DNA2/NAM7 helicase family. In terms of assembly, interacts with POLR2A. Interacts with SMYD3; the interaction may bridge SMYD3 and RNA polymerase II. Interacts with SMYD2.

Its subcellular location is the nucleus. Its function is as follows. May act as a helicase that plays a role in RNA metabolism in multiple tissues and organs within the developing embryo. The chain is Probable helicase with zinc finger domain (Helz) from Mus musculus (Mouse).